The sequence spans 101 residues: STAS-domain containing protein PA14_20770 (101 aa).

The region spanning 14-101 is the STAS domain; it reads LTIQIQGRFD…SNFEQLFKIS (88 aa).

In terms of processing, phosphorylated on a serine residue, possibly on Ser-56.

It is found in the secreted. In Pseudomonas aeruginosa (strain UCBPP-PA14), this protein is STAS-domain containing protein PA14_20770.